We begin with the raw amino-acid sequence, 91 residues long: Small ribosomal subunit protein bS18 (91 aa).

This sequence belongs to the bacterial ribosomal protein bS18 family. Part of the 30S ribosomal subunit. Forms a tight heterodimer with protein bS6.

In terms of biological role, binds as a heterodimer with protein bS6 to the central domain of the 16S rRNA, where it helps stabilize the platform of the 30S subunit. This chain is Small ribosomal subunit protein bS18, found in Wolbachia pipientis wMel.